A 247-amino-acid chain; its full sequence is Suppressor of silencing P0 (247 aa).

The F-box-like domain maps to 76–95; that stretch reads LPRHLHYECLEWGLLCGTHP.

It belongs to the polerovirus P0 protein family.

Its function is as follows. Suppressor of RNA-mediated gene silencing, also known as post-transcriptional gene silencing (PTGS), a mechanism of plant viral defense that limits the accumulation of viral RNAs. The P0 protein suppresses local PTGS using its F-box-like domain to mediate destabilization and degradation of the AGO1 protein, although not via an interaction with host SKP1A. Participates, together with the proteins P1 and P7, in the inhibition of the induction of aphid-induced host phytohormones. This could play a role in the attraction to the infected plants by aphids. This is Suppressor of silencing P0 from Potato leafroll virus (strain Potato/Scotland/strain 1/1984) (PLrV).